The following is a 132-amino-acid chain: Vesicle transport protein GOT1A (132 aa).

Residues 1–9 are Cytoplasmic-facing; that stretch reads MISITEWQK. The chain crosses the membrane as a helical span at residues 10–30; that stretch reads IGVGITGFGIFFILFGTLLYF. A topological domain (lumenal) is located at residue D31. A helical transmembrane segment spans residues 32–52; that stretch reads SVLLAFGNLLFLTGLSLIIGL. At 53–68 the chain is on the cytoplasmic side; the sequence is RKTFWFFFQRHKLKGT. Residues 69 to 89 traverse the membrane as a helical segment; sequence SFLLGGVVIVLLRWPLLGMFL. The Lumenal portion of the chain corresponds to 90–100; that stretch reads ETYGFFSLFKG. A helical membrane pass occupies residues 101–121; that stretch reads FFPVAFGFLGNVCNIPFLGAL. At 122 to 132 the chain is on the cytoplasmic side; the sequence is FRRLQGTSSMV.

This sequence belongs to the GOT1 family.

The protein resides in the golgi apparatus membrane. Its function is as follows. May be involved in fusion of ER-derived transport vesicles with the Golgi complex. This is Vesicle transport protein GOT1A from Homo sapiens (Human).